The primary structure comprises 79 residues: Mipartoxin-3 (79 aa).

The N-terminal stretch at 1-21 is a signal peptide; it reads MKTLLLTLVVVTIVCLDLGNS. 4 disulfide bridges follow: Cys-24–Cys-41, Cys-34–Cys-59, Cys-63–Cys-71, and Cys-72–Cys-77.

It belongs to the three-finger toxin family. Short-chain subfamily. In terms of tissue distribution, expressed by the venom gland.

Its subcellular location is the secreted. Snake venom neurotoxin that blocks neuromuscular transmission, presenting a postsynaptic action through the nicotinic acetylcholine receptor (nAChR). Has no cytotoxic activity. The chain is Mipartoxin-3 from Micrurus mipartitus (Red-tailed coral snake).